Here is a 669-residue protein sequence, read N- to C-terminus: Bestrophin-3 (669 aa).

The Cytoplasmic segment spans residues 1 to 31 (MTVTYSSKVANATFFGFHRLLLKWRGSIYKL). Residue Ala10 coordinates Ca(2+). Residues 32-51 (LYREFIVFAVLYTAISLVYR) traverse the membrane as a helical segment. Residues 52-60 (LLLTGAQKR) are Extracellular-facing. Residues 61–82 (YFEKLSIYCDRYAEQIPVTFVL) form a helical membrane-spanning segment. Topologically, residues 83-237 (GFYVTLVVNR…DWVGIPLVYT (155 aa)) are cytoplasmic. Residues 238–255 (QVVTLAVYTFFFACLIGR) traverse the membrane as a helical segment. Residues 256–274 (QFLDPTKGYVGHDLDLYVP) lie on the Extracellular side of the membrane. A helical transmembrane segment spans residues 275 to 288 (IFTLLQFFFYAGWL). Residues 289–669 (KVAEQLINPF…GTPQRPRTWF (381 aa)) lie on the Cytoplasmic side of the membrane. Positions 293, 296, 301, and 304 each coordinate Ca(2+). 4 disordered regions span residues 399–496 (LSTH…TKMP), 533–560 (QPSG…SAST), 591–627 (TSLG…GAGS), and 646–669 (ILEF…RTWF). Positions 440–451 (NPHRGSPTRKQS) are enriched in basic residues. Over residues 475–492 (RTSTLQSLSPQSSVRSSP) the composition is skewed to low complexity. A compositionally biased stretch (polar residues) spans 533-543 (QPSGTEQQVEP). Residues 646–656 (ILEFNNEHTGE) show a composition bias toward basic and acidic residues.

The protein belongs to the anion channel-forming bestrophin (TC 1.A.46) family. Calcium-sensitive chloride channel subfamily. In terms of tissue distribution, expressed in heart. As to expression, expressed in brain, retina/retinal pigment epithelium (RPE) and skeletal muscle. Expressed in acinar cells of parotid glands. Expressed in lung, kidney and testis.

Its subcellular location is the cell membrane. It catalyses the reaction chloride(in) = chloride(out). In terms of biological role, ligand-gated anion channel that allows the movement of chloride monoatomic anions across cell membranes when activated by calcium (Ca2+). Does not function as calcium-gated chloride channel. This is Bestrophin-3 (Best3) from Mus musculus (Mouse).